The sequence spans 173 residues: Archaemetzincin (173 aa).

Residue H130 participates in Zn(2+) binding. Residue E131 is the Proton acceptor of the active site. H134, H140, C141, C146, C165, and C168 together coordinate Zn(2+).

Belongs to the peptidase M54 family. As to quaternary structure, monomer. Zn(2+) is required as a cofactor.

Probable zinc metalloprotease whose natural substrate is unknown. This is Archaemetzincin from Haloquadratum walsbyi (strain DSM 16790 / HBSQ001).